The sequence spans 130 residues: YopE regulator (130 aa).

Its function is as follows. Positive regulator of YopE. In Yersinia pestis, this protein is YopE regulator (yerA).